Here is a 248-residue protein sequence, read N- to C-terminus: Probable transcriptional regulatory protein M446_6579 (248 aa).

The protein belongs to the TACO1 family.

The protein resides in the cytoplasm. This Methylobacterium sp. (strain 4-46) protein is Probable transcriptional regulatory protein M446_6579.